Reading from the N-terminus, the 617-residue chain is Chaperone protein DnaK (617 aa).

Threonine 174 is modified (phosphothreonine; by autocatalysis). Low complexity predominate over residues 575–592 (AQAQQQAQQQAQGQQGAQ). The interval 575 to 617 (AQAQQQAQQQAQGQQGAQTDNQTGQNDGKTIDVDYEEVDDDDK) is disordered. A compositionally biased stretch (polar residues) spans 593-602 (TDNQTGQNDG). The span at 607-617 (VDYEEVDDDDK) shows a compositional bias: acidic residues.

Belongs to the heat shock protein 70 family.

Functionally, acts as a chaperone. In Halothermothrix orenii (strain H 168 / OCM 544 / DSM 9562), this protein is Chaperone protein DnaK.